A 154-amino-acid chain; its full sequence is Nucleoside diphosphate kinase (154 aa).

Residues Lys12, Phe60, Arg88, Thr94, Arg105, and Asn115 each contribute to the ATP site. His118 functions as the Pros-phosphohistidine intermediate in the catalytic mechanism.

The protein belongs to the NDK family. The cofactor is Mg(2+).

The protein resides in the cytoplasm. The catalysed reaction is a 2'-deoxyribonucleoside 5'-diphosphate + ATP = a 2'-deoxyribonucleoside 5'-triphosphate + ADP. The enzyme catalyses a ribonucleoside 5'-diphosphate + ATP = a ribonucleoside 5'-triphosphate + ADP. In terms of biological role, major role in the synthesis of nucleoside triphosphates other than ATP. The ATP gamma phosphate is transferred to the NDP beta phosphate via a ping-pong mechanism, using a phosphorylated active-site intermediate. This chain is Nucleoside diphosphate kinase, found in Haloarcula marismortui (strain ATCC 43049 / DSM 3752 / JCM 8966 / VKM B-1809) (Halobacterium marismortui).